An 802-amino-acid chain; its full sequence is Phenylalanine--tRNA ligase beta subunit (802 aa).

Positions 38–149 constitute a tRNA-binding domain; that stretch reads KSSLKPFVIA…ADAPVGTSFA (112 aa). One can recognise a B5 domain in the interval 399 to 474; sequence HKPKIVSFPI…RIHGVDNIAP (76 aa). Mg(2+) is bound by residues aspartate 452, aspartate 458, glutamate 461, and glutamate 462. The FDX-ACB domain occupies 708–801; that stretch reads SAFQAVKRDF…VGKQTGGVLR (94 aa).

Belongs to the phenylalanyl-tRNA synthetase beta subunit family. Type 1 subfamily. As to quaternary structure, tetramer of two alpha and two beta subunits. Requires Mg(2+) as cofactor.

It localises to the cytoplasm. The enzyme catalyses tRNA(Phe) + L-phenylalanine + ATP = L-phenylalanyl-tRNA(Phe) + AMP + diphosphate + H(+). The sequence is that of Phenylalanine--tRNA ligase beta subunit from Mesorhizobium japonicum (strain LMG 29417 / CECT 9101 / MAFF 303099) (Mesorhizobium loti (strain MAFF 303099)).